We begin with the raw amino-acid sequence, 779 residues long: Neutral ceramidase 1 (779 aa).

The Nucleophile role is filled by Ser-350. 3 N-linked (GlcNAc...) asparagine glycosylation sites follow: Asn-368, Asn-432, and Asn-667.

Belongs to the neutral ceramidase family. As to expression, mostly expressed in stems, leaves, roots and siliques, and, to a lower extent, in flowers.

The protein localises to the secreted. It localises to the endoplasmic reticulum. It is found in the golgi apparatus. It carries out the reaction an N-acylsphing-4-enine + H2O = sphing-4-enine + a fatty acid. Functionally, hydrolyzes the sphingolipid ceramide into sphingosine and free fatty acid. Regulates sphingolipid homeostasis. Promotes oxidative stress resistance. This Arabidopsis thaliana (Mouse-ear cress) protein is Neutral ceramidase 1.